We begin with the raw amino-acid sequence, 100 residues long: MQLTPREVEKLMIYTLSDVAFKRKARGLKLNYPEAVSIITVTAMEGARDGKSVEDVMKEASQVLTKDDVMDGVADLIPNVQVEAIFTDGSRLVTVHDPIK.

It belongs to the urease gamma subunit family. As to quaternary structure, heterotrimer of UreA (gamma), UreB (beta) and UreC (alpha) subunits. Three heterotrimers associate to form the active enzyme.

Its subcellular location is the cytoplasm. The catalysed reaction is urea + 2 H2O + H(+) = hydrogencarbonate + 2 NH4(+). It participates in nitrogen metabolism; urea degradation; CO(2) and NH(3) from urea (urease route): step 1/1. The chain is Urease subunit gamma from Yersinia aldovae.